The primary structure comprises 1484 residues: Ral GTPase-activating protein subunit beta (1484 aa).

Disordered regions lie at residues 355 to 437 (PRSD…APRR) and 697 to 728 (GGEN…PDSE). Phosphoserine is present on serine 359. 2 positions are modified to phosphothreonine: threonine 363 and threonine 379. Composition is skewed to polar residues over residues 369–381 (SMPQ…TTPP), 392–428 (NKAT…TSSE), and 701–725 (NLKS…PTTP). 2 positions are modified to phosphoserine: serine 421 and serine 710. Threonine 724 is modified (phosphothreonine). In terms of domain architecture, Rap-GAP spans 1138-1382 (IGYLDLLPCR…TTLEKEVPVI (245 aa)). A Phosphoserine modification is found at serine 1275. The segment at 1301–1325 (DSLNSSQRLSPSSRMKKLPQGRPVP) is disordered. Residues 1302–1313 (SLNSSQRLSPSS) show a composition bias toward low complexity.

As to quaternary structure, component of the heterodimeric RalGAP1 complex with RALGAPA1 and of the heterodimeric RalGAP2 complex with RALGAPA2. Heterodimerization is required for activity. Detected in brain, thymus, lung, heart, spleen, liver and testis (at protein level).

In terms of biological role, non-catalytic subunit of the heterodimeric RalGAP1 and RalGAP2 complexes which act as GTPase activators for the Ras-like small GTPases RALA and RALB. The chain is Ral GTPase-activating protein subunit beta from Rattus norvegicus (Rat).